The sequence spans 411 residues: Arginine deiminase (411 aa).

The active-site Amidino-cysteine intermediate is cysteine 401.

It belongs to the arginine deiminase family.

It is found in the cytoplasm. It catalyses the reaction L-arginine + H2O = L-citrulline + NH4(+). It functions in the pathway amino-acid degradation; L-arginine degradation via ADI pathway; carbamoyl phosphate from L-arginine: step 1/2. In Streptococcus pyogenes serotype M49 (strain NZ131), this protein is Arginine deiminase.